A 193-amino-acid chain; its full sequence is Superoxide dismutase [Fe] (193 aa).

A Fe cation-binding site is contributed by His27. Lys51 bears the N6-acetyllysine mark. Fe cation is bound by residues His74, Asp157, and His161.

The protein belongs to the iron/manganese superoxide dismutase family. In terms of assembly, homodimer. Fe cation serves as cofactor.

It carries out the reaction 2 superoxide + 2 H(+) = H2O2 + O2. Its function is as follows. Destroys superoxide anion radicals which are normally produced within the cells and which are toxic to biological systems. In Escherichia coli O157:H7, this protein is Superoxide dismutase [Fe] (sodB).